Reading from the N-terminus, the 169-residue chain is Gamma-crystallin 2 (169 aa).

Beta/gamma crystallin 'Greek key' domains lie at 1–34 (YEDR…KVDS) and 35–77 (GCWM…KVIP). Residues 78–82 (QQKGP) are connecting peptide. Beta/gamma crystallin 'Greek key' domains are found at residues 83 to 123 (HKMK…NVLE) and 124 to 166 (GHWI…RRVL).

This sequence belongs to the beta/gamma-crystallin family. In terms of assembly, monomer.

Functionally, crystallins are the dominant structural components of the vertebrate eye lens. The sequence is that of Gamma-crystallin 2 from Rana temporaria (European common frog).